We begin with the raw amino-acid sequence, 730 residues long: Propionyl-CoA carboxylase alpha chain, mitochondrial (730 aa).

Residues 1–52 constitute a mitochondrion transit peptide; sequence MAGLWVGGSVLVAAGRRGSRSPRPLMRSVALWTLKHVPQYSRQRLLVSRSLC. Residues 62 to 509 form the Biotin carboxylation domain; it reads TFDKILIANR…NTKFLSDVYP (448 aa). N6-acetyllysine; alternate is present on Lys-65. Residue Lys-65 is modified to N6-succinyllysine; alternate. N6-succinyllysine is present on Lys-119. N6-acetyllysine; alternate is present on Lys-150. An N6-succinyllysine; alternate modification is found at Lys-150. The residue at position 154 (Lys-154) is an N6-acetyllysine. Lys-177 contacts ATP. The ATP-grasp domain maps to 181–378; it reads KLLAKKAKVN…LVQEMIRVAK (198 aa). N6-succinyllysine is present on Lys-188. Lys-200 carries the post-translational modification N6-acetyllysine; alternate. N6-succinyllysine; alternate is present on Lys-200. Residues 209–270, Glu-261, and Asn-296 each bind ATP; that span reads AREI…PRHI. Ser-252 carries the post-translational modification Phosphoserine. Lys-262 is modified (N6-succinyllysine). Residues Glu-336, Glu-349, and Asn-351 each contribute to the Mg(2+) site. Residues Glu-336, Glu-349, and Asn-351 each contribute to the Mn(2+) site. The active site involves Glu-349. Lys-407 is subject to N6-succinyllysine. Biotin is bound at residue Phe-409. 3 positions are modified to N6-succinyllysine: Lys-502, Lys-513, and Lys-650. The Biotinyl-binding domain maps to 655–730; the sequence is KAAEDTSSIL…GEGDLLVELE (76 aa). Lys-696 carries the N6-biotinyllysine modification.

As to quaternary structure, the holoenzyme is a dodecamer composed of 6 PCCA/alpha subunits and 6 PCCB/beta subunits. Interacts (via the biotin carboxylation domain) with SIRT4. Interacts with SIRT3 and SIRT5. It depends on Mg(2+) as a cofactor. Requires Mn(2+) as cofactor. Biotin is required as a cofactor. Acetylated. In terms of processing, the biotin cofactor is covalently attached to the C-terminal biotinyl-binding domain and is required for the catalytic activity. Biotinylation is catalyzed by HLCS.

The protein resides in the mitochondrion matrix. It carries out the reaction propanoyl-CoA + hydrogencarbonate + ATP = (S)-methylmalonyl-CoA + ADP + phosphate + H(+). The catalysed reaction is butanoyl-CoA + hydrogencarbonate + ATP = (2S)-ethylmalonyl-CoA + ADP + phosphate + H(+). The protein operates within metabolic intermediate metabolism; propanoyl-CoA degradation; succinyl-CoA from propanoyl-CoA: step 1/3. Functionally, this is one of the 2 subunits of the biotin-dependent propionyl-CoA carboxylase (PCC), a mitochondrial enzyme involved in the catabolism of odd chain fatty acids, branched-chain amino acids isoleucine, threonine, methionine, and valine and other metabolites. Propionyl-CoA carboxylase catalyzes the carboxylation of propionyl-CoA/propanoyl-CoA to D-methylmalonyl-CoA/(S)-methylmalonyl-CoA. Within the holoenzyme, the alpha subunit catalyzes the ATP-dependent carboxylation of the biotin carried by the biotin carboxyl carrier (BCC) domain, while the beta subunit then tranfers the carboxyl group from carboxylated biotin to propionyl-CoA. Propionyl-CoA carboxylase also significantly acts on butyryl-CoA/butanoyl-CoA, which is converted to ethylmalonyl-CoA/(2S)-ethylmalonyl-CoA at a much lower rate. Other alternative minor substrates include (2E)-butenoyl-CoA/crotonoyl-CoA. The polypeptide is Propionyl-CoA carboxylase alpha chain, mitochondrial (Sus scrofa (Pig)).